The following is a 465-amino-acid chain: FAD-dependent oxidoreductase pigF (465 aa).

An N-terminal signal peptide occupies residues 1 to 17 (MMLLTLLILSSVGLAAA). 4 N-linked (GlcNAc...) asparagine glycosylation sites follow: Asn-95, Asn-138, Asn-260, and Asn-327. Residue Asp-444 is the site of GPI-anchor amidated aspartate attachment. Residues 445–465 (SASGIWNLTNAVVLPGLLTGL) constitute a propeptide, removed in mature form. Asn-451 carries N-linked (GlcNAc...) asparagine glycosylation.

It belongs to the beta-cyclopiazonate dehydrogenase family. It depends on FAD as a cofactor.

It localises to the cell membrane. It functions in the pathway secondary metabolite biosynthesis. In terms of biological role, FAD-dependent oxidoreductase; part of the gene cluster that mediates the biosynthesis of azaphilone pigments (MonAzPs), a complex mixture of compounds with a common azaphilone skeleton very widely used as food colorants. Within the pathway, pigF desaturates C6(7) to afford the orange and red pigments from yellow pigments. The first step of the pathway is performed by the nrPKS pigA that forms the hexaketide precursor from successive condensations of five malonyl-CoA units, with a simple acetyl-CoA starter unit. The role of esterase pigG is not clear, but it may play at most a supplementary role in the formation of the benzaldehyde produced by the pigA nrPKS. This very reactive benzaldehyde is intercepted by the pigC ketoreductase that to provide the first stable enzyme-free MonAzPs intermediate, 6-(4-hydroxy-2-oxopentyl)-3-methyl-2,4-dioxocyclohexane carbaldehyde, also known as M7PKS-1. The FAD-dependent monooxygenase pigN hydroxylates M7PKS-1 at C-4, which triggers the formation of the pyran ring. PigJ, pigK and pigD are involved in the acetylation of the pyran ring. PigJ and pigK form the two subunits of a dedicated fungal FAS that produces the side chain fatty acyl moiety of MonAzPs and pigD transfers the fatty acyl chain to the C-4 alcohol. PigM and pigO are involved in the elimination of the omega-1 alcohol. PigM acts as an O-acetyltransferase that synthesizes the putative O-11 acetyl intermediate whereas pigO eliminates acetic acid to yield an intermediate with a C10(11) double bond. The dehydration of the C-11 alcohol followed by the reduction of the C6(7) double bond by the NAD(P)H-dependent oxidoreductase pigE increases the electrophilicity of the C-5 ketone of the resulting acyl benzopyran. This in turn sets up the C-5 ketone for an intramolecular Knoevenagel aldol condensation with the C-20 enol of the side chain. This condensation affords the characteristic linear tricyclic carbon skeletons of the yellow pigments that serve as the common precursors for the classical yellow pigments monascin and ankaflavin, orange pigments rubopunctatin and monascorubrin, and red pigments ribropunctamine and monascorubramine. The FAD-dependent oxidoreductase pigF is especially invoved in the biosynthesis of orange and red pigments via desaturation of C6(7). The sequence is that of FAD-dependent oxidoreductase pigF from Monascus ruber (Mold).